Consider the following 228-residue polypeptide: Ephrin-A5 (228 aa).

Positions 1 to 20 are cleaved as a signal peptide; it reads MLHVEMLTLLFLVLWMCVFS. An Ephrin RBD domain is found at 29 to 162; sequence ADRYAVYWNS…KLKVFVRPTN (134 aa). Asn-37 is a glycosylation site (N-linked (GlcNAc...) asparagine). 2 cysteine pairs are disulfide-bonded: Cys-62–Cys-102 and Cys-90–Cys-151. N-linked (GlcNAc...) asparagine; atypical glycosylation is present at Asn-162. Residues 186 to 205 form a disordered region; that stretch reads EPADDTVHESAEPSRGENAA. Positions 190 to 200 are enriched in basic and acidic residues; the sequence is DTVHESAEPSR. Asn-203 carries GPI-anchor amidated asparagine lipidation. Positions 204 to 228 are cleaved as a propeptide — removed in mature form; sequence AAQTPRIPSRLLAILLFLLAMLLTL.

The protein belongs to the ephrin family. As to quaternary structure, binds to the receptor tyrosine kinases EPHA2, EPHA3 and EPHB1. Forms a ternary EFNA5-EPHA3-ADAM10 complex mediating EFNA5 extracellular domain shedding by ADAM10 which regulates the EFNA5-EPHA3 complex internalization and function. Binds to EPHB2. Interacts with EPHA8; activates EPHA8. Expressed in myogenic progenitor cells.

Its subcellular location is the cell membrane. The protein localises to the membrane. The protein resides in the caveola. Cell surface GPI-bound ligand for Eph receptors, a family of receptor tyrosine kinases which are crucial for migration, repulsion and adhesion during neuronal, vascular and epithelial development. Binds promiscuously Eph receptors residing on adjacent cells, leading to contact-dependent bidirectional signaling into neighboring cells. The signaling pathway downstream of the receptor is referred to as forward signaling while the signaling pathway downstream of the ephrin ligand is referred to as reverse signaling. Induces compartmentalized signaling within a caveolae-like membrane microdomain when bound to the extracellular domain of its cognate receptor. This signaling event requires the activity of the Fyn tyrosine kinase. Activates the EPHA3 receptor to regulate cell-cell adhesion and cytoskeletal organization. With the receptor EPHA2 may regulate lens fiber cells shape and interactions and be important for lens transparency maintenance. May function actively to stimulate axon fasciculation. The interaction of EFNA5 with EPHA5 also mediates communication between pancreatic islet cells to regulate glucose-stimulated insulin secretion. Cognate/functional ligand for EPHA7, their interaction regulates brain development modulating cell-cell adhesion and repulsion. The protein is Ephrin-A5 (Efna5) of Mus musculus (Mouse).